The chain runs to 704 residues: Ion-translocating oxidoreductase complex subunit C (704 aa).

2 4Fe-4S ferredoxin-type domains span residues 368–397 and 407–436; these read MGAPQEEKSCIRCSACADACPADLLPQQLY and KATAHHIADCIECGACAWVCPSNIPLVQYF. Cysteine 377, cysteine 380, cysteine 383, cysteine 387, cysteine 416, cysteine 419, cysteine 422, and cysteine 426 together coordinate [4Fe-4S] cluster. A disordered region spans residues 534–682; that stretch reads QARAKQAAHP…AEPADPRKAA (149 aa).

Belongs to the 4Fe4S bacterial-type ferredoxin family. RnfC subfamily. The complex is composed of six subunits: RsxA, RsxB, RsxC, RsxD, RsxE and RsxG. [4Fe-4S] cluster serves as cofactor.

It localises to the cell inner membrane. In terms of biological role, part of a membrane-bound complex that couples electron transfer with translocation of ions across the membrane. Required to maintain the reduced state of SoxR. In Salmonella enteritidis PT4 (strain P125109), this protein is Ion-translocating oxidoreductase complex subunit C.